Reading from the N-terminus, the 582-residue chain is ATP-dependent lipid A-core flippase (582 aa).

The next 6 helical transmembrane spans lie at 23 to 43, 61 to 81, 140 to 160, 163 to 183, 247 to 267, and 273 to 293; these read AAFIAAILCMIGYSAIDTLFL, ILLYGALFVPFIFILRGSLNV, AVLVLVKEGAFVAGLLGLMFY, WQLSLVFLVIGPLVAKVVGVV, AISTSVIQFIASLSLSMVLVI, and MLGELSAGAFTTLLTAMIMLL. The ABC transmembrane type-1 domain occupies 26–308; it reads IAAILCMIGY…LTNVNSDFQR (283 aa). Positions 340 to 576 constitute an ABC transporter domain; sequence IVFDDVTFSY…EGAYFQLHNL (237 aa). 374 to 381 contacts ATP; the sequence is GRSGSGKS.

Belongs to the ABC transporter superfamily. Lipid exporter (TC 3.A.1.106) family. As to quaternary structure, homodimer.

It is found in the cell inner membrane. The catalysed reaction is ATP + H2O + lipid A-core oligosaccharideSide 1 = ADP + phosphate + lipid A-core oligosaccharideSide 2.. Functionally, involved in lipopolysaccharide (LPS) biosynthesis. Translocates lipid A-core from the inner to the outer leaflet of the inner membrane. Transmembrane domains (TMD) form a pore in the inner membrane and the ATP-binding domain (NBD) is responsible for energy generation. This is ATP-dependent lipid A-core flippase from Idiomarina loihiensis (strain ATCC BAA-735 / DSM 15497 / L2-TR).